The following is a 264-amino-acid chain: 3-methyl-2-oxobutanoate hydroxymethyltransferase (264 aa).

Residues aspartate 45 and aspartate 84 each coordinate Mg(2+). Residues 45–46, aspartate 84, and lysine 112 contribute to the 3-methyl-2-oxobutanoate site; that span reads DS. Glutamate 114 lines the Mg(2+) pocket. Catalysis depends on glutamate 181, which acts as the Proton acceptor.

Belongs to the PanB family. As to quaternary structure, homodecamer; pentamer of dimers. Requires Mg(2+) as cofactor.

The protein resides in the cytoplasm. The catalysed reaction is 3-methyl-2-oxobutanoate + (6R)-5,10-methylene-5,6,7,8-tetrahydrofolate + H2O = 2-dehydropantoate + (6S)-5,6,7,8-tetrahydrofolate. Its pathway is cofactor biosynthesis; (R)-pantothenate biosynthesis; (R)-pantoate from 3-methyl-2-oxobutanoate: step 1/2. Catalyzes the reversible reaction in which hydroxymethyl group from 5,10-methylenetetrahydrofolate is transferred onto alpha-ketoisovalerate to form ketopantoate. The chain is 3-methyl-2-oxobutanoate hydroxymethyltransferase from Psychromonas ingrahamii (strain DSM 17664 / CCUG 51855 / 37).